The sequence spans 440 residues: Phosphoglycerate kinase, glycosomal (440 aa).

(2R)-3-phosphoglycerate is bound by residues V23, D24, F25, N26, R39, S61, H62, G64, R65, R135, H171, and R172. Residue G217 participates in CDP binding. An ADP-binding site is contributed by A218. AMP-binding residues include A218 and K219. Residue A218 participates in ATP binding. Mg(2+) is bound at residue A218. K219 provides a ligand contact to (2R)-3-phosphoglycerate. D222 lines the CDP pocket. D222 contributes to the Mg(2+) binding site. K223 and G241 together coordinate ADP. Residue K223 coordinates AMP. Residue G241 coordinates CDP. The AMP site is built by A242 and A314. A242 and A314 together coordinate ATP. Residues A314 and N338 each contribute to the ADP site. 2 residues coordinate CDP: G339 and F344. Residues F344, E345, D377, and S378 each coordinate ADP. E345 is an AMP binding site. ATP contacts are provided by D377 and S378. D377 contributes to the Mg(2+) binding site.

The protein belongs to the phosphoglycerate kinase family. In terms of assembly, monomer. Mg(2+) is required as a cofactor.

It is found in the glycosome. It catalyses the reaction (2R)-3-phosphoglycerate + ATP = (2R)-3-phospho-glyceroyl phosphate + ADP. It participates in carbohydrate degradation; glycolysis; pyruvate from D-glyceraldehyde 3-phosphate: step 2/5. In Trypanosoma brucei brucei, this protein is Phosphoglycerate kinase, glycosomal.